Consider the following 330-residue polypeptide: RNA polymerase sigma factor RpoS (330 aa).

Residues 56–89 form a sigma-70 factor domain-1 region; sequence DATQLYLGEIGYSPLLTAEEEVYFARRALRGDVA. The sigma-70 factor domain-2 stretch occupies residues 94–164; that stretch reads MIESNLRLVV…ERAIMNQTRT (71 aa). An Interaction with polymerase core subunit RpoC motif is present at residues 118-121; it reads DLIE. The sigma-70 factor domain-3 stretch occupies residues 174-249; the sequence is ELNVYLRTAR…DEKENGPEDT (76 aa). The segment at 262 to 315 is sigma-70 factor domain-4; sequence WLFELNAKQREVLARRFGLLGYEAATLEDVGREIGLTRERVRQIQVEGLRRLRE. Positions 288 to 307 form a DNA-binding region, H-T-H motif; the sequence is LEDVGREIGLTRERVRQIQV.

The protein belongs to the sigma-70 factor family. RpoS subfamily. In terms of assembly, interacts with the RNA polymerase core enzyme.

It localises to the cytoplasm. Functionally, sigma factors are initiation factors that promote the attachment of RNA polymerase to specific initiation sites and are then released. This sigma factor is the master transcriptional regulator of the stationary phase and the general stress response. In Salmonella dublin, this protein is RNA polymerase sigma factor RpoS.